The following is a 547-amino-acid chain: Chaperonin GroEL 1 (547 aa).

ATP is bound by residues 30-33 (TLGP), lysine 51, 87-91 (DGTTT), glycine 415, and aspartate 496.

The protein belongs to the chaperonin (HSP60) family. As to quaternary structure, forms a cylinder of 14 subunits composed of two heptameric rings stacked back-to-back. Interacts with the co-chaperonin GroES.

Its subcellular location is the cytoplasm. It catalyses the reaction ATP + H2O + a folded polypeptide = ADP + phosphate + an unfolded polypeptide.. Functionally, together with its co-chaperonin GroES, plays an essential role in assisting protein folding. The GroEL-GroES system forms a nano-cage that allows encapsulation of the non-native substrate proteins and provides a physical environment optimized to promote and accelerate protein folding. The polypeptide is Chaperonin GroEL 1 (Rhodopseudomonas palustris (strain BisB18)).